The following is a 282-amino-acid chain: Ribosomal RNA small subunit methyltransferase I (282 aa).

It belongs to the methyltransferase superfamily. RsmI family.

It is found in the cytoplasm. The enzyme catalyses cytidine(1402) in 16S rRNA + S-adenosyl-L-methionine = 2'-O-methylcytidine(1402) in 16S rRNA + S-adenosyl-L-homocysteine + H(+). Its function is as follows. Catalyzes the 2'-O-methylation of the ribose of cytidine 1402 (C1402) in 16S rRNA. This is Ribosomal RNA small subunit methyltransferase I from Buchnera aphidicola subsp. Acyrthosiphon pisum (strain APS) (Acyrthosiphon pisum symbiotic bacterium).